A 47-amino-acid chain; its full sequence is Putative heat shock protein HSP90 (47 aa).

Residue R47 coordinates ATP.

The protein belongs to the heat shock protein 90 family. As to quaternary structure, homodimer.

The protein resides in the cytoplasm. Functionally, putative molecular chaperone that may promote the maturation, structural maintenance and proper regulation of specific target proteins. This chain is Putative heat shock protein HSP90, found in Populus euphratica (Euphrates poplar).